The following is a 352-amino-acid chain: MEGISIYTSDNYTEEMGSGDYDSIKEPCFREENAHFNRIFLPTIYSIIFLTGIVGNGLVILVMGYQKKLRSMTDKYRLHLSVADLLFVITLPFWAVDAVANWYFGNFLCKAVHVIYTVNLYSSVLILAFISLDRYLAIVHATNSQKPRKLLAEKVVYVGVWIPALLLTIPDFIFASVSEADDRYICDRFYPNDLWVVVFQFQHIMVGLILPGIVILSCYCIIISKLSHSKGHQKGKALKTTVILILAFFACWLPYYIGISIDSFILLEIIKQGCEFENTVHKWISITEALAFFHCCLNPILYAFLGAKFKTSAQHALTSVSRGSSLKILSKGKRGGHSSVSTESESSSFHSS.

The tract at residues 1–21 is important for chemokine binding and signaling; the sequence is MEGISIYTSDNYTEEMGSGDY. Residues 1–38 are Extracellular-facing; that stretch reads MEGISIYTSDNYTEEMGSGDYDSIKEPCFREENAHFNR. A Sulfotyrosine modification is found at Y7. N11 is a glycosylation site (N-linked (GlcNAc...) asparagine). Y12 bears the Sulfotyrosine mark. S18 carries an O-linked (Xyl...) (chondroitin sulfate) serine glycan. Position 21 is a sulfotyrosine (Y21). Cystine bridges form between C28-C274 and C109-C186. The helical transmembrane segment at 39 to 63 threads the bilayer; it reads IFLPTIYSIIFLTGIVGNGLVILVM. The Cytoplasmic portion of the chain corresponds to 64-77; sequence GYQKKLRSMTDKYR. Residues 78 to 99 traverse the membrane as a helical segment; it reads LHLSVADLLFVITLPFWAVDAV. The tract at residues 94–97 is chemokine binding; the sequence is WAVD. The Extracellular portion of the chain corresponds to 100 to 110; sequence ANWYFGNFLCK. A helical transmembrane segment spans residues 111–130; the sequence is AVHVIYTVNLYSSVLILAFI. Residues 113-117 form a chemokine binding region; it reads HVIYT. Residues 131 to 154 are Cytoplasmic-facing; sequence SLDRYLAIVHATNSQKPRKLLAEK. The Important for signaling signature appears at 133 to 135; sequence DRY. The segment at 135-147 is involved in dimerization; when bound to chemokine; the sequence is YLAIVHATNSQKP. The chain crosses the membrane as a helical span at residues 155 to 174; that stretch reads VVYVGVWIPALLLTIPDFIF. Residues 175–195 are Extracellular-facing; sequence ASVSEADDRYICDRFYPNDLW. Residues 186–190 form a chemokine binding, important for signaling region; that stretch reads CDRFY. Residues 191-210 are involved in dimerization; sequence PNDLWVVVFQFQHIMVGLIL. A helical transmembrane segment spans residues 196 to 216; the sequence is VVVFQFQHIMVGLILPGIVIL. The Cytoplasmic segment spans residues 217-241; it reads SCYCIIISKLSHSKGHQKGKALKTT. The helical transmembrane segment at 242 to 261 threads the bilayer; the sequence is VILILAFFACWLPYYIGISI. Residues 262–282 are Extracellular-facing; the sequence is DSFILLEIIKQGCEFENTVHK. Positions 266-268 are involved in dimerization; that stretch reads LLE. The chain crosses the membrane as a helical span at residues 283-302; sequence WISITEALAFFHCCLNPILY. The Cytoplasmic portion of the chain corresponds to 303-352; that stretch reads AFLGAKFKTSAQHALTSVSRGSSLKILSKGKRGGHSSVSTESESSSFHSS. A phosphoserine mark is found at S319 and S321. Residues S324 and S325 each carry the phosphoserine; by PKC and GRK6 modification. Residues 329–352 are disordered; sequence LSKGKRGGHSSVSTESESSSFHSS. S330 is subject to Phosphoserine; by GRK6. A Glycyl lysine isopeptide (Lys-Gly) (interchain with G-Cter in ubiquitin) cross-link involves residue K331. A compositionally biased stretch (low complexity) spans 337-352; that stretch reads HSSVSTESESSSFHSS. Residue S339 is modified to Phosphoserine; by GRK6. A phosphoserine mark is found at S348 and S351.

The protein belongs to the G-protein coupled receptor 1 family. In terms of assembly, monomer. Can form homodimers. Interacts with CD164. Interacts with ARRB2; the interaction is dependent on the C-terminal phosphorylation of CXCR4 and allows activation of MAPK1 and MAPK3. Interacts with ARR3; the interaction is dependent on the C-terminal phosphorylation of CXCR4 and modulates calcium mobilization. Interacts with RNF113A; the interaction, enhanced by CXCL12, promotes CXCR4 ubiquitination and subsequent degradation. Interacts (via the cytoplasmic C-terminal) with ITCH (via the WW domains I and II); the interaction, enhanced by CXCL12, promotes CXCR4 ubiquitination and leads to its degradation. Interacts with extracellular ubiquitin. Interacts with DBN1; this interaction is enhanced by antigenic stimulation. Following LPS binding, may form a complex with GDF5, HSP90AA1 and HSPA8. Post-translationally, phosphorylated on agonist stimulation. Rapidly phosphorylated on serine and threonine residues in the C-terminal. Phosphorylation at Ser-324 and Ser-325 leads to recruitment of ITCH, ubiquitination and protein degradation. Ubiquitinated after ligand binding, leading to its degradation. Ubiquitinated by ITCH at the cell membrane on agonist stimulation. The ubiquitin-dependent mechanism, endosomal sorting complex required for transport (ESCRT), then targets CXCR4 for lysosomal degradation. This process is dependent also on prior Ser-/Thr-phosphorylation in the C-terminal of CXCR4. Also binding of ARRB1 to STAM negatively regulates CXCR4 sorting to lysosomes though modulating ubiquitination of SFR5S. In terms of processing, sulfation is required for efficient binding of CXCL12/SDF-1alpha and promotes its dimerization. Post-translationally, O- and N-glycosylated. N-glycosylation can mask coreceptor function. The O-glycosylation chondroitin sulfate attachment does not affect interaction with CXCL12/SDF-1alpha nor its coreceptor activity.

The protein localises to the cell membrane. Its subcellular location is the cell junction. The protein resides in the early endosome. It localises to the late endosome. It is found in the lysosome. Receptor for the C-X-C chemokine CXCL12/SDF-1 that transduces a signal by increasing intracellular calcium ion levels and enhancing MAPK1/MAPK3 activation. Involved in the AKT signaling cascade. Plays a role in regulation of cell migration, e.g. during wound healing. Acts as a receptor for extracellular ubiquitin; leading to enhanced intracellular calcium ions and reduced cellular cAMP levels. Binds bacterial lipopolysaccharide (LPS) et mediates LPS-induced inflammatory response, including TNF secretion by monocytes. Involved in hematopoiesis and in cardiac ventricular septum formation. Also plays an essential role in vascularization of the gastrointestinal tract, probably by regulating vascular branching and/or remodeling processes in endothelial cells. Involved in cerebellar development. In the CNS, could mediate hippocampal-neuron survival. This chain is C-X-C chemokine receptor type 4 (CXCR4), found in Chlorocebus aethiops (Green monkey).